Reading from the N-terminus, the 392-residue chain is Probable Ni/Fe-hydrogenase 2 b-type cytochrome subunit (392 aa).

Residues 1-11 are Periplasmic-facing; that stretch reads MSHDPQPLGGK. Residues 12–32 form a helical membrane-spanning segment; sequence IISKPVMIFGPLIVICMLLIV. Residues 33–34 are Cytoplasmic-facing; it reads KR. The helical transmembrane segment at 35 to 55 threads the bilayer; sequence LVFGLGSVSDLNGGFPWGVWI. Topologically, residues 56-58 are periplasmic; that stretch reads AFD. A helical membrane pass occupies residues 59-79; that stretch reads LLIGTGFACGGWALAWAVYVF. The Cytoplasmic segment spans residues 80 to 90; it reads NRGQYHPLVRP. A helical membrane pass occupies residues 91–111; it reads ALLASLFGYSLGGLSITIDVG. Residues 112 to 133 are Periplasmic-facing; sequence RYWNLPYFYIPGHFNVNSVLFE. The helical transmembrane segment at 134–154 threads the bilayer; that stretch reads TAVCMTIYIGVMALEFAPALF. At 155 to 168 the chain is on the cytoplasmic side; the sequence is ERLGWKVSLQRLNK. Residues 169 to 189 form a helical membrane-spanning segment; the sequence is VMFFIIALGALLPTMHQSSMG. Topologically, residues 190–207 are periplasmic; sequence SLMISAGYKVHPLWQSYE. The chain crosses the membrane as a helical span at residues 208 to 228; it reads MLPLFSLLTAFIMGFSIVIFE. Residues 229 to 249 lie on the Cytoplasmic side of the membrane; sequence GSLVQAGLRGNGPDEKSLFVK. Residues 250 to 270 traverse the membrane as a helical segment; it reads LTNTISVLLAIFIVLRFGELI. Topologically, residues 271 to 281 are periplasmic; it reads YRDKLSLAFAG. Residues 282–302 form a helical membrane-spanning segment; sequence DFYSVMFWIEVLLMLFPLVVL. At 303–333 the chain is on the cytoplasmic side; that stretch reads RVAKLRNDSRMLFLSALSALLGCATWRLTYS. The chain crosses the membrane as a helical span at residues 334–354; that stretch reads LVAFNPGGGYAYFPTWEELLI. A topological domain (periplasmic) is located at residue serine 355. The helical transmembrane segment at 356–376 threads the bilayer; sequence IGFVAIEICAYIVLIRLLPIL. Topologically, residues 377–392 are cytoplasmic; it reads PPLKQNDHNRHEASKA.

This sequence belongs to the NrfD family.

The protein localises to the cell inner membrane. Functionally, probable b-type cytochrome. This chain is Probable Ni/Fe-hydrogenase 2 b-type cytochrome subunit (hybB), found in Escherichia coli (strain K12).